We begin with the raw amino-acid sequence, 313 residues long: D-alanine--D-alanine ligase (313 aa).

Positions lysine 108 to serine 308 constitute an ATP-grasp domain. Valine 138 to tyrosine 193 provides a ligand contact to ATP. Residues aspartate 262, glutamate 275, and asparagine 277 each coordinate Mg(2+).

The protein belongs to the D-alanine--D-alanine ligase family. The cofactor is Mg(2+). Mn(2+) is required as a cofactor.

The protein localises to the cytoplasm. The enzyme catalyses 2 D-alanine + ATP = D-alanyl-D-alanine + ADP + phosphate + H(+). It participates in cell wall biogenesis; peptidoglycan biosynthesis. Cell wall formation. This is D-alanine--D-alanine ligase from Burkholderia ambifaria (strain MC40-6).